The chain runs to 295 residues: Glutamyl-Q tRNA(Asp) synthetase (295 aa).

L-glutamate-binding positions include 9 to 13 (RFAPT) and Glu45. A 'HIGH' region motif is present at residues 12 to 22 (PTPSGFLHFGS). Zn(2+)-binding residues include Cys101, Cys103, Tyr115, and Cys119. Residues Tyr172 and Arg190 each coordinate L-glutamate. The short motif at 228 to 232 (KLGKS) is the 'KMSKS' region element. Residue Lys231 participates in ATP binding.

The protein belongs to the class-I aminoacyl-tRNA synthetase family. GluQ subfamily. Zn(2+) serves as cofactor.

Catalyzes the tRNA-independent activation of glutamate in presence of ATP and the subsequent transfer of glutamate onto a tRNA(Asp). Glutamate is transferred on the 2-amino-5-(4,5-dihydroxy-2-cyclopenten-1-yl) moiety of the queuosine in the wobble position of the QUC anticodon. The polypeptide is Glutamyl-Q tRNA(Asp) synthetase (Pseudomonas putida (strain W619)).